We begin with the raw amino-acid sequence, 517 residues long: Glutamate--tRNA ligase (517 aa).

The 'HIGH' region signature appears at Pro10–Gly20. The Zn(2+) site is built by Cys107, Cys109, Cys134, and Asp136. A 'KMSKS' region motif is present at residues Lys250–Arg254. Lys253 is an ATP binding site.

This sequence belongs to the class-I aminoacyl-tRNA synthetase family. Glutamate--tRNA ligase type 1 subfamily. In terms of assembly, monomer. The cofactor is Zn(2+).

It localises to the cytoplasm. The catalysed reaction is tRNA(Glu) + L-glutamate + ATP = L-glutamyl-tRNA(Glu) + AMP + diphosphate. Functionally, catalyzes the attachment of glutamate to tRNA(Glu) in a two-step reaction: glutamate is first activated by ATP to form Glu-AMP and then transferred to the acceptor end of tRNA(Glu). This Leptospira biflexa serovar Patoc (strain Patoc 1 / ATCC 23582 / Paris) protein is Glutamate--tRNA ligase.